The chain runs to 1108 residues: TBC1 domain family member 8B (1108 aa).

2 GRAM domains span residues 143–210 (LRFE…ERTS) and 283–351 (QSFR…ELPD). The 188-residue stretch at 469-656 (GVPETLRGEL…NVVDCFFYDG (188 aa)) folds into the Rab-GAP TBC domain. The EF-hand domain maps to 822–857 (HSRSLARSAFHLLDENGDGLVNFKEFICGLDILYNR). Residues aspartate 835, asparagine 837, aspartate 839, and glutamate 846 each coordinate Ca(2+). Positions 961–1059 (GRKLQDSSPQ…PTDTPSSPCT (99 aa)) are disordered. Residues 967–998 (SSPQKTPQTTPTSTSQPESSPTKPTSPESETP) show a composition bias toward low complexity. The span at 1010–1024 (SPVSQHETAPSHSDI) shows a compositional bias: polar residues. The segment covering 1025–1057 (TPNSTSHPSTPTSSPTETSSPVLDTPTDTPSSP) has biased composition (low complexity).

Its subcellular location is the cytoplasm. It localises to the cytosol. Functionally, involved in vesicular recycling, probably as a GTPase-activating protein for Rab family protein(s). The chain is TBC1 domain family member 8B (tbc1d8b) from Danio rerio (Zebrafish).